The primary structure comprises 235 residues: NAD-dependent protein deacylase (235 aa).

Residues 1 to 235 (MDLRLFKNIV…VPRFITQFLE (235 aa)) form the Deacetylase sirtuin-type domain. 14–33 (GAGISAESGIRTFRDQDGLW) serves as a coordination point for NAD(+). Residues Tyr-58 and Arg-61 each coordinate substrate. 95-98 (QNVD) is a binding site for NAD(+). The Proton acceptor role is filled by His-113. Cys-121, Cys-124, Cys-140, and Cys-143 together coordinate Zn(2+). NAD(+)-binding positions include 180–182 (GTS), 204–206 (NLK), and Ala-222.

Belongs to the sirtuin family. Class III subfamily. It depends on Zn(2+) as a cofactor.

It is found in the cytoplasm. The enzyme catalyses N(6)-acetyl-L-lysyl-[protein] + NAD(+) + H2O = 2''-O-acetyl-ADP-D-ribose + nicotinamide + L-lysyl-[protein]. The catalysed reaction is N(6)-succinyl-L-lysyl-[protein] + NAD(+) + H2O = 2''-O-succinyl-ADP-D-ribose + nicotinamide + L-lysyl-[protein]. Its function is as follows. NAD-dependent lysine deacetylase and desuccinylase that specifically removes acetyl and succinyl groups on target proteins. Modulates the activities of several proteins which are inactive in their acylated form. In Bdellovibrio bacteriovorus (strain ATCC 15356 / DSM 50701 / NCIMB 9529 / HD100), this protein is NAD-dependent protein deacylase.